The following is a 604-amino-acid chain: DNA polymerase alpha subunit B (604 aa).

The tract at residues 109-171 (ETLLNSYTTP…KYSSRSNRGE (63 aa)) is disordered. Residues 113–141 (NSYTTPSKGSQKRTITTPETPLTKRSVSA) are compositionally biased toward polar residues. 2 positions are modified to phosphothreonine: Thr129 and Thr132. Residues Ser143, Ser149, Ser154, and Ser156 each carry the phosphoserine modification. A compositionally biased stretch (low complexity) spans 143–160 (SPHQLLSPSSFSPSATPP).

It belongs to the DNA polymerase alpha subunit B family. In terms of assembly, component of the alpha DNA polymerase complex (also known as the alpha DNA polymerase-primase complex) consisting of four subunits: the catalytic subunit POLA1, the regulatory subunit POLA2, and the primase complex subunits PRIM1 and PRIM2 respectively. Within the complex, POLA1 directly interacts with PRIM2. Post-translationally, phosphorylated in a cell cycle-dependent manner, in G2/M phase.

It is found in the nucleus. Functionally, accessory subunit of the DNA polymerase alpha complex (also known as the alpha DNA polymerase-primase complex) which plays an essential role in the initiation of DNA synthesis. During the S phase of the cell cycle, the DNA polymerase alpha complex (composed of a catalytic subunit POLA1, an accessory subunit POLA2 and two primase subunits, the catalytic subunit PRIM1 and the regulatory subunit PRIM2) is recruited to DNA at the replicative forks via direct interactions with MCM10 and WDHD1. The primase subunit of the polymerase alpha complex initiates DNA synthesis by oligomerising short RNA primers on both leading and lagging strands. These primers are initially extended by the polymerase alpha catalytic subunit and subsequently transferred to polymerase delta and polymerase epsilon for processive synthesis on the lagging and leading strand, respectively. The polypeptide is DNA polymerase alpha subunit B (POLA2) (Bos taurus (Bovine)).